The primary structure comprises 315 residues: Ribosomal RNA small subunit methyltransferase H (315 aa).

S-adenosyl-L-methionine contacts are provided by residues 35–37 (GGH), D55, F80, D102, and Q109.

The protein belongs to the methyltransferase superfamily. RsmH family.

It is found in the cytoplasm. The enzyme catalyses cytidine(1402) in 16S rRNA + S-adenosyl-L-methionine = N(4)-methylcytidine(1402) in 16S rRNA + S-adenosyl-L-homocysteine + H(+). In terms of biological role, specifically methylates the N4 position of cytidine in position 1402 (C1402) of 16S rRNA. This is Ribosomal RNA small subunit methyltransferase H from Shewanella halifaxensis (strain HAW-EB4).